A 632-amino-acid polypeptide reads, in one-letter code: Fem-3 mRNA-binding factor 2 (632 aa).

Residues 1–11 (MDQSKMRRTNQ) are compositionally biased toward basic residues. A disordered region spans residues 1-37 (MDQSKMRRTNQFRKTSQKPPSTGIDSYPTPAQSPMAQ). The span at 12–35 (FRKTSQKPPSTGIDSYPTPAQSPM) shows a compositional bias: polar residues. Positions 162–566 (TRSNNVLPTW…KMIETLANLR (405 aa)) constitute a PUM-HD domain. Pumilio repeat units follow at residues 187-225 (EVLD…QLFE), 226-264 (QVIG…GYTK), 271-307 (NFIS…KLVQ), 308-332 (ALPR…QKVV), 345-384 (DFVA…DLTS), 400-436 (SVTN…CIIE), 438-473 (CLMR…EMMD), and 484-521 (DTGK…RQTK). Positions 609-632 (MLEPRSNKSSVSVKFSSSGSHGDD) are disordered. A compositionally biased stretch (low complexity) spans 615–632 (NKSSVSVKFSSSGSHGDD).

As to quaternary structure, interacts (via C-terminus) with gld-3 isoform A in an RNA-independent manner. Interacts with dlc-1, and is required for the localization of fbf-2 to P granules. Interacts (via RNA-binding domain) with lst-1, probably displaces bound auto-inhibitory C-terminal tail and alters its RNA-binding affinity. As to expression, expressed specifically in the germline (at protein level).

It localises to the cytoplasm. The protein localises to the cytoplasmic granule. Functionally, RNA-binding protein that binds to the consensus sequence 5'-UGUGCCAUA-3' in mRNA 3'-UTRs. Involved in the control of stem cells and sex determination in the C.elegans hermaphrodite germline. May also play a role in the hermaphrodite germline proliferation and oogenesis. By binding to the 3'-UTR, represses phosphatase lip-1 expression in the distal part of the germline mitotic zone. Binds specifically to the regulatory region of fem-3 3'-UTR and mediates the sperm/oocyte switch. Negatively regulates gld-3 expression possibly by directly binding to two sites within the gld-3 isoform b 3'-UTR. Suppresses germline tumor formation by preventing the dedifferentiation of secondary spermatocytes. C-terminal disordered region probably auto-inhibits RNA binding; auto-inhibition may be reversed by interaction with lst-1. The protein is Fem-3 mRNA-binding factor 2 of Caenorhabditis elegans.